Reading from the N-terminus, the 2527-residue chain is MGRSDSRAGALLEGGCEQNIDPRRAAHCHHPRLATSSLRCSQPSGTCLNGGRCEVANGTEACVCSGPFVGQRCQDPNPCLSTPCKNAGTCHVVEHGGTVNYACSCPLGFSGPLCLTPLDNACLANPCRNGGTCDLLTLTEYKCRCPPGWSGKSCQQADPCASNPCANGGQCLPFESSYICGCPPGFHGPTCRQDVNECSQNPGLCRHGGTCHNEIGSYRCVCRATHTGPHCELPYVPCSPSPCQNGGTCRPTGDTTHECACLPGFAGQNCEENVDDCPGNNCKNGGACVDGVNTYNCRCPPEWTGQYCTEDVDECQLMPNACQNGGTCHNTHGGYNCVCVNGWTGEDCSENIDDCASAACFQGATCHDRVASFYCECPHGRTGLLCHLNDACISNPCNEGSNCDTNPVNGKAICTCPSGYTGPACSQDVDECALGANPCEHAGKCLNTLGSFECQCLQGYTGPRCEIDVNECISNPCQNDATCLDQIGEFQCICMPGYEGVYCEINTDECASSPCLHNGHCMDKINEFLCQCPKGFSGHLCQYDVDECASTPCKNGAKCLDGPNTYTCVCTEGYTGTHCEVDIDECDPDPCHYGFCKDGVATFTCLCQPGYTGHHCETNINECHSQPCRHGGTCQDRDNSYLCLCLKGTTGPNCEINLDDCASNPCDSGTCLDKIDGYECACEPGYTGSMCNVNIDECAGSPCHNGGTCEDGIAGFTCRCPEGYHDPTCLSEVNECNSNPCIHGACRDGLNGYKCDCAPGWSGTNCDINNNECESNPCVNGGTCKDMTSGYVCTCREGFSGPNCQTNINECASNPCLNQGTCIDDVAGYKCNCPLPYTGATCEVVLAPCATSPCKNSGVCKESEDYESFSCVCPTGWQGQTCEIDINECVKSPCRHGASCQNTNGSYRCLCQAGYTGRNCESDIDDCRPNPCHNGGSCTDGINMAFCDCLPGFQGAFCEEDINECASNPCRNGANCTDCVDSYTCTCPAGFNGIHCENNTPDCTESSCFNGGTCVDGINSFTCLCPPGFTGSYCQYDVNECDSRPCLHGGTCQDSYGTYKCTCPQGYTGLNCQNLVHWCDSAPCKNGGKCWQTNTQYHCECRSGWTGFNCDVLSVSCEVAAQKRGIDVTLLCQHGGLCVDEEDKHYCHCQAGYTGSYCEDEVDECSPNPCQNGATCTDYLGGFSCKCVAGYHGSNCSEEINECLSQPCQNGGTCIDLTNTYKCSCPRGTQGVHCEINVDDCHPHLDPASRSPKCFNNGTCVDQVGGYSCTCPPGFVGERCEGDINECLSNPCDPRGTQDCVQRVNDFHCECRAGHTGRRCESVINGCRGKPCKNGGVCAVASNTARGFICRCPAGFEGATCENDARTCGSLRCLNGGTCISGPRSPTCLCLGSFTGPECQFPASSPCVGSNPCYNQGTCEPTSESPFYRCLCPAKFNGLLCHILDYSFTGGAGRDIPPPQIEEACELPECQEDAGNKVCNLQCNNHACGWDGGDCSLNFNDPWKNCTQSLQCWKYFSDGHCDSQCNSASCLFDGFDCQRTEGQCNPLYDQYCKDHFSDGHCDQGCNSAECDWDGLDCADHVPERLAAGTLVLVVLLPPEQLRNNSFHFLRELSHVLHTNVVFKRDAEGQQMIFPYYGHEEELRKHPIKRSAVGWTTSSLLPSTNGGRQRRELDPMDIRGSIVYLEIDNRQCVQSSSQCFQSATDVAAFLGALASLGNLNIPYKIEAVKSETVEPPLPSQLHLMYLAAAAFVLLFFVGCGVLLSRKRRRQHGQLWFPEGFKVSEASKKKRREPLGEDSVGLKPLKNASDGALMDDNQNEWGDEDLETKKFRFEEPVVVPDLDDQTDHRQWTQQHLDAADLRMSAMAPTPPQGEVDADCMDVNVRGPDGFTPLMIASCSGGGLETGNSEEEEDAPAVISDFIYQGASLHNQTDRTGETALHLAARYSRSDAAKRLLEASADANIQDNMGRTPLHAAVSADAQGVFQILLRNRATDLDARMHDGTTPLILAARLAVEGMLEDLINSHADVNAVDDLGKSALHWAAAVNNVDAAVVLLKNGANKDMQNNKEETPLFLAAREGSYETAKVLLDHFANRDITDHMDRLPRDIAQERMHHDIVRLLDEYNLVRSPQLHGTALGGTPTLSPTLCSPNGYLGNLKSATQGKKARKPSTKGLACGSKEAKDLKARRKKSQDGKGCLLDSSSMLSPVDSLESPHGYLSDVASPPLLPSPFQQSPSMPLSHLPGMPDTHLGISHLNVAAKPEMAALAGSSRLAFEPPPPRLPHLPVASSASTVLSTNGSXGEEEWLAPSQYNPLRPGVASGTLSTQAAGLQHGMMGPLHSSLSTNTLSPMIYQGLPNTRLATQPHLVQTQQVQPQNLQIQPQNLQPPSQPHLSVSSAANGHLGRSFLGGEHSQADVQPLGPSSLPVHTILPQESQALPTSLPSSMVPPMTTTQFLTPPSQHSYSSSPVDNTPSHQLQVPEHPFLTPSPESPDQWSSSSPHSNISDWSEGISSPPTSMPSQITHIPEAFK.

Positions 1–36 (MGRSDSRAGALLEGGCEQNIDPRRAAHCHHPRLATS) are cleaved as a signal peptide. Residues 37–1741 (SLRCSQPSGT…VEPPLPSQLH (1705 aa)) are Extracellular-facing. Cystine bridges form between Cys-40-Cys-53, Cys-47-Cys-62, Cys-64-Cys-73, Cys-79-Cys-90, Cys-84-Cys-103, Cys-105-Cys-114, Cys-122-Cys-133, Cys-127-Cys-143, Cys-145-Cys-154, Cys-160-Cys-171, Cys-165-Cys-180, Cys-182-Cys-191, Cys-198-Cys-211, Cys-205-Cys-220, Cys-222-Cys-231, Cys-238-Cys-249, Cys-243-Cys-259, Cys-261-Cys-270, Cys-277-Cys-288, Cys-282-Cys-297, Cys-299-Cys-308, Cys-315-Cys-328, Cys-322-Cys-337, Cys-339-Cys-348, Cys-355-Cys-366, Cys-360-Cys-375, Cys-377-Cys-386, Cys-392-Cys-403, Cys-397-Cys-414, Cys-416-Cys-425, Cys-432-Cys-445, Cys-439-Cys-454, and Cys-456-Cys-465. The N-linked (GlcNAc...) asparagine glycan is linked to Asn-57. 3 EGF-like domains span residues 75-115 (DPNP…PLCL), 118-155 (LDNA…KSCQ), and 156-192 (QADP…PTCR). The O-linked (Glc...) serine glycan is linked to Ser-81. Residue Thr-89 is glycosylated (O-linked (Fuc...) threonine). The O-linked (Fuc...) threonine glycan is linked to Thr-132. O-linked (Glc...) serine glycosylation occurs at Ser-162. The 39-residue stretch at 194–232 (DVNECSQNPGLCRHGGTCHNEIGSYRCVCRATHTGPHCE) folds into the EGF-like 4; calcium-binding domain. The O-linked (Fuc...) threonine glycan is linked to Thr-210. The 38-residue stretch at 234-271 (PYVPCSPSPCQNGGTCRPTGDTTHECACLPGFAGQNCE) folds into the EGF-like 5 domain. Thr-248 carries an O-linked (Fuc...) threonine; alternate glycan. Thr-248 carries an O-linked (GalNAc...) threonine; alternate glycan. Positions 273 to 309 (NVDDCPGNNCKNGGACVDGVNTYNCRCPPEWTGQYCT) constitute an EGF-like 6; calcium-binding domain. The EGF-like 7; calcium-binding domain occupies 311–349 (DVDECQLMPNACQNGGTCHNTHGGYNCVCVNGWTGEDCS). O-linked (Fuc...) threonine glycosylation occurs at Thr-327. One can recognise an EGF-like 8; calcium-binding domain in the interval 351–387 (NIDDCASAACFQGATCHDRVASFYCECPHGRTGLLCH). Ser-357 is a glycosylation site (O-linked (Glc...) serine). The O-linked (Fuc...) threonine glycan is linked to Thr-365. Positions 388 to 426 (LNDACISNPCNEGSNCDTNPVNGKAICTCPSGYTGPACS) constitute an EGF-like 9 domain. Ser-394 is a glycosylation site (O-linked (Glc...) serine). The 39-residue stretch at 428–466 (DVDECALGANPCEHAGKCLNTLGSFECQCLQGYTGPRCE) folds into the EGF-like 10; calcium-binding domain. Residues 436–437 (AN) are interaction with DLL4. Positions 448 and 451 each coordinate Ca(2+). A glycan (O-linked (Glc...) serine) is linked at Ser-451. The segment at 464–468 (RCEID) is interaction with DLL4. Asp-468, Val-469, and Glu-471 together coordinate Ca(2+). Positions 468 to 504 (DVNECISNPCQNDATCLDQIGEFQCICMPGYEGVYCE) constitute an EGF-like 11; calcium-binding domain. Cystine bridges form between Cys-472–Cys-483, Cys-477–Cys-492, and Cys-494–Cys-503. The O-linked (Glc...) serine glycan is linked to Ser-474. A glycan (O-linked (Fuc...) threonine) is linked at Thr-482. 2 residues coordinate Ca(2+): Asp-485 and Gln-486. Residues Asn-506, Thr-507, and Glu-509 each contribute to the Ca(2+) site. The EGF-like 12; calcium-binding domain maps to 506–542 (NTDECASSPCLHNGHCMDKINEFLCQCPKGFSGHLCQ). 28 disulfide bridges follow: Cys-510–Cys-521, Cys-515–Cys-530, Cys-532–Cys-541, Cys-548–Cys-559, Cys-553–Cys-568, Cys-570–Cys-579, Cys-586–Cys-596, Cys-591–Cys-605, Cys-607–Cys-616, Cys-623–Cys-634, Cys-628–Cys-643, Cys-645–Cys-654, Cys-661–Cys-671, Cys-666–Cys-680, Cys-682–Cys-691, Cys-698–Cys-709, Cys-703–Cys-718, Cys-720–Cys-729, Cys-736–Cys-746, Cys-741–Cys-755, Cys-757–Cys-766, Cys-773–Cys-784, Cys-778–Cys-793, Cys-795–Cys-804, Cys-811–Cys-822, Cys-816–Cys-831, Cys-833–Cys-842, and Cys-849–Cys-860. Residue Ser-512 is glycosylated (O-linked (Glc...) serine). Residues Asp-523 and Lys-524 each coordinate Ca(2+). In terms of domain architecture, EGF-like 13; calcium-binding spans 544–580 (DVDECASTPCKNGAKCLDGPNTYTCVCTEGYTGTHCE). Residue Ser-550 is glycosylated (O-linked (Glc...) serine). The region spanning 582–617 (DIDECDPDPCHYGFCKDGVATFTCLCQPGYTGHHCE) is the EGF-like 14; calcium-binding domain. The EGF-like 15; calcium-binding domain occupies 619–655 (NINECHSQPCRHGGTCQDRDNSYLCLCLKGTTGPNCE). A glycan (O-linked (Glc...) serine) is linked at Ser-625. A glycan (O-linked (Fuc...) threonine) is linked at Thr-633. The region spanning 657-692 (NLDDCASNPCDSGTCLDKIDGYECACEPGYTGSMCN) is the EGF-like 16; calcium-binding domain. O-linked (Glc...) serine glycosylation occurs at Ser-663. The region spanning 694-730 (NIDECAGSPCHNGGTCEDGIAGFTCRCPEGYHDPTCL) is the EGF-like 17; calcium-binding domain. The O-linked (Fuc...) threonine glycan is linked to Thr-708. One can recognise an EGF-like 18; calcium-binding domain in the interval 732 to 767 (EVNECNSNPCIHGACRDGLNGYKCDCAPGWSGTNCD). Ser-738 carries O-linked (Glc...) serine glycosylation. The region spanning 769-805 (NNNECESNPCVNGGTCKDMTSGYVCTCREGFSGPNCQ) is the EGF-like 19 domain. O-linked (Glc...) serine glycosylation is present at Ser-775. Residue Thr-783 is glycosylated (O-linked (Fuc...) threonine). The O-linked (GlcNAc) serine glycan is linked to Ser-800. Residues 807 to 843 (NINECASNPCLNQGTCIDDVAGYKCNCPLPYTGATCE) form the EGF-like 20; calcium-binding domain. A glycan (O-linked (Glc...) serine) is linked at Ser-813. The O-linked (Fuc...) threonine glycan is linked to Thr-821. The EGF-like 21 domain maps to 845-883 (VLAPCATSPCKNSGVCKESEDYESFSCVCPTGWQGQTCE). The EGF-like 22; calcium-binding domain occupies 885–921 (DINECVKSPCRHGASCQNTNGSYRCLCQAGYTGRNCE). An N-linked (GlcNAc...) asparagine glycan is attached at Asn-904. O-linked (GlcNAc) threonine glycosylation occurs at Thr-916. The EGF-like 23 domain maps to 923–959 (DIDDCRPNPCHNGGSCTDGINMAFCDCLPGFQGAFCE). Ser-937 carries O-linked (Fuc) serine glycosylation. The 37-residue stretch at 961–997 (DINECASNPCRNGANCTDCVDSYTCTCPAGFNGIHCE) folds into the EGF-like 24; calcium-binding domain. O-linked (Glc...) serine glycosylation occurs at Ser-967. Asn-975 carries an N-linked (GlcNAc...) asparagine glycan. EGF-like domains follow at residues 999-1035 (NTPD…SYCQ), 1037-1073 (DVNE…LNCQ), 1075-1111 (LVHW…FNCD), 1113-1159 (LSVS…SYCE), and 1161-1197 (EVDE…SNCS). O-linked (Fuc...) threonine glycosylation is present at Thr-1013. The O-linked (Glc...) serine glycan is linked to Ser-1043. Thr-1051 is a glycosylation site (O-linked (Fuc...) threonine). The O-linked (Glc...) serine glycan is linked to Ser-1081. Cys-1117 and Cys-1138 are disulfide-bonded. O-linked (Fuc...) threonine glycosylation occurs at Thr-1175. Asn-1195 carries an N-linked (GlcNAc...) asparagine glycan. The EGF-like 30; calcium-binding domain occupies 1199–1235 (EINECLSQPCQNGGTCIDLTNTYKCSCPRGTQGVHCE). Residue Ser-1205 is glycosylated (O-linked (Glc...) serine). Residue Thr-1213 is glycosylated (O-linked (Fuc...) threonine). In terms of domain architecture, EGF-like 31; calcium-binding spans 1237-1281 (NVDDCHPHLDPASRSPKCFNNGTCVDQVGGYSCTCPPGFVGERCE). N-linked (GlcNAc...) asparagine glycosylation is present at Asn-1257. EGF-like domains follow at residues 1283 to 1321 (DINE…RRCE), 1323 to 1362 (VING…ATCE), 1364 to 1400 (DART…PECQ), and 1403 to 1442 (ASSP…LLCH). A glycan (O-linked (Glc...) serine) is linked at Ser-1289. The O-linked (Fuc...) threonine glycan is linked to Thr-1378. Residue Thr-1395 is glycosylated (O-linked (GlcNAc...) threonine). A glycan (O-linked (Fuc...) threonine; alternate) is linked at Thr-1418. A glycan (O-linked (GalNAc...) threonine; alternate) is linked at Thr-1418. LNR repeat units lie at residues 1465–1505 (CELP…PWKN), 1506–1547 (CTQS…CNPL), and 1548–1587 (YDQY…RLAA). Ca(2+) is bound by residues Asp-1473, Asn-1476, Asp-1491, and Asp-1494. An N-linked (GlcNAc...) asparagine glycan is attached at Asn-1505. Residue Asn-1603 is glycosylated (N-linked (GlcNAc...) asparagine). O-linked (GalNAc...) threonine glycosylation occurs at Thr-1731. The tract at residues 1734–1766 (PPLPSQLHLMYLAAAAFVLLFFVGCGVLLSRKR) is interaction with PSEN1. Residues 1742-1762 (LMYLAAAAFVLLFFVGCGVLL) form a helical membrane-spanning segment. The Cytoplasmic segment spans residues 1763-2527 (SRKRRRQHGQ…QITHIPEAFK (765 aa)). Lys-1765 is covalently cross-linked (Glycyl lysine isopeptide (Lys-Gly) (interchain with G-Cter in ubiquitin)). The interval 1786–1814 (KKKRREPLGEDSVGLKPLKNASDGALMDD) is disordered. Thr-1867 carries the phosphothreonine modification. 5 ANK repeats span residues 1933 to 1962 (TGET…DANI), 1966 to 1996 (MGRT…DLDA), 2000 to 2029 (DGTT…DVNA), 2033 to 2062 (LGKS…NKDM), and 2066 to 2095 (KEET…NRDI). The segment at 1953-1961 (LLEASADAN) is HIF1AN-binding. (3S)-3-hydroxyasparagine; by HIF1AN; partial is present on Asn-1961. The interval 2020–2028 (LINSHADVN) is HIF1AN-binding. Asn-2028 carries the post-translational modification (3S)-3-hydroxyasparagine; by HIF1AN. Disordered regions lie at residues 2157 to 2201 (SATQ…DSSS), 2378 to 2424 (QPQN…SLPV), and 2436 to 2527 (PTSL…EAFK). The segment covering 2378 to 2391 (QPQNLQPPSQPHLS) has biased composition (low complexity). Over residues 2436-2474 (PTSLPSSMVPPMTTTQFLTPPSQHSYSSSPVDNTPSHQL) the composition is skewed to polar residues. Low complexity predominate over residues 2484 to 2499 (PSPESPDQWSSSSPHS). Polar residues predominate over residues 2500 to 2520 (NISDWSEGISSPPTSMPSQIT).

This sequence belongs to the NOTCH family. In terms of assembly, heterodimer of a C-terminal fragment N(TM) and an N-terminal fragment N(EC) which are probably linked by disulfide bonds. Interacts with DNER, DTX1, DTX2 and RBPJ/RBPSUH. Also interacts with MAML1, MAML2 and MAML3 which act as transcriptional coactivators for NOTCH1. Notch 1 intracellular domain interacts with SNW1; the interaction involves multimerized NOTCH1 NICD and is implicated in a formation of an intermediate preactivation complex which associates with DNA-bound CBF-1/RBPJ. The activated membrane-bound form interacts with AAK1 which promotes NOTCH1 stabilization. Forms a trimeric complex with FBXW7 and SGK1. Interacts with HIF1AN. HIF1AN negatively regulates the function of notch intracellular domain (NICD), accelerating myogenic differentiation. Interacts (via NICD) with SNAI1 (via zinc fingers); the interaction induces SNAI1 degradation via MDM2-mediated ubiquitination and inhibits SNAI1-induced cell invasion. Interacts (via NICD) with MDM2A. Interacts (via NICD) with BCL6; the interaction decreases MAML1 recruitment by NOTCH1 NICD on target genes DNA and inhibits NOTCH1 transactivation activity. Interacts with THBS4. Interacts (via the EGF-like repeat region) with CCN3 (via CTCK domain). Interacts (via EGF-like domains) with DLL4 (via N-terminal DSL and MNNL domains). Interacts with ZMIZ1. Interacts (via NICD domain) with MEGF10 (via the cytoplasmic domain). Interacts with DLL1 and JAG1. Interacts (via NICD domain) with PRAG1. Forms a complex with PRAG1, N1ICD and MAML1, in a MAML1-dependent manner. Interacts (via transmembrane region) with PSEN1; the interaction is direct. Interacts with ZFP64. Synthesized in the endoplasmic reticulum as an inactive form which is proteolytically cleaved by a furin-like convertase in the trans-Golgi network before it reaches the plasma membrane to yield an active, ligand-accessible form. Cleavage results in a C-terminal fragment N(TM) and a N-terminal fragment N(EC). Following ligand binding, it is cleaved by ADAM17 to yield a membrane-associated intermediate fragment called notch extracellular truncation (NEXT). Following endocytosis, this fragment is then cleaved by one of the catalytic subunits of gamma-secretase (PSEN1 or PSEN2) to release a Notch-derived peptide containing the intracellular domain (NICD) from the membrane. Post-translationally, phosphorylated. In terms of processing, O-linked glycosylation by GALNT11 is involved in determination of left/right symmetry: glycosylation promotes activation of NOTCH1, possibly by promoting cleavage by ADAM17, modulating the balance between motile and immotile (sensory) cilia at the left-right organiser (LRO). O-glycosylated on the EGF-like domains. O-glucosylated at Ser-451 by KDELC1 and KDELC2. Contains both O-linked fucose and O-linked glucose in the EGF-like domains 11, 12 and 13, which are interacting with the residues on DLL4. MFNG-, RFNG- and LFNG-mediated modification of O-fucose residues at specific EGF-like domains results in inhibition of its activation by JAG1 and enhancement of its activation by DLL1 via an increased binding to DLL1. Ubiquitinated. Undergoes 'Lys-29'-linked polyubiquitination by ITCH; promotes the lysosomal degradation of non-activated internalized NOTCH1. Deubiquitination by USP12 is required for transport of internalized non-activated receptor from late endosomes to lysosomes for degradation. Monoubiquitination at Lys-1765 is required for activation by gamma-secretase cleavage, it promotes interaction with AAK1, which stabilizes it. Deubiquitination by EIF3F is necessary for nuclear import of activated Notch. Post-translationally, hydroxylated at Asn-1961 by HIF1AN. Hydroxylated at Asn-2028 by HIF1AN. Hydroxylation reduces affinity for HI1AN and may thus indirectly modulate negative regulation of NICD.

Its subcellular location is the cell membrane. The protein resides in the late endosome membrane. It is found in the nucleus. Functions as a receptor for membrane-bound ligands Jagged-1 (JAG1), Jagged-2 (JAG2) and Delta-1 (DLL1) to regulate cell-fate determination. Upon ligand activation through the released notch intracellular domain (NICD) it forms a transcriptional activator complex with RBPJ/RBPSUH and activates genes of the enhancer of split locus. Affects the implementation of differentiation, proliferation and apoptotic programs. Involved in angiogenesis; negatively regulates endothelial cell proliferation and migration and angiogenic sprouting. Involved in the maturation of both CD4(+) and CD8(+) cells in the thymus. Important for follicular differentiation and possibly cell fate selection within the follicle. During cerebellar development, functions as a receptor for neuronal DNER and is involved in the differentiation of Bergmann glia. Represses neuronal and myogenic differentiation. May play an essential role in postimplantation development, probably in some aspect of cell specification and/or differentiation. May be involved in mesoderm development, somite formation and neurogenesis. May enhance HIF1A function by sequestering HIF1AN away from HIF1A. Required for the THBS4 function in regulating protective astrogenesis from the subventricular zone (SVZ) niche after injury. Involved in determination of left/right symmetry by modulating the balance between motile and immotile (sensory) cilia at the left-right organiser (LRO). This is Neurogenic locus notch homolog protein 1 (NOTCH1) from Cricetulus griseus (Chinese hamster).